The following is a 377-amino-acid chain: Putative FBD-associated F-box protein At5g44940 (377 aa).

An F-box domain is found at 4 to 50 (FDYISEFPDCLLTQILLNLPTKDSVKTSVLSKRWRNLWLNVPGLRLR). The FBD domain occupies 297-346 (IDFHKVPQCLISTLEYVQIEELILKEKSGIKLVDYFLENSAVLKKLTLSF).

This is Putative FBD-associated F-box protein At5g44940 from Arabidopsis thaliana (Mouse-ear cress).